A 271-amino-acid polypeptide reads, in one-letter code: Protein PXR1 (271 aa).

Residues 25-72 enclose the G-patch domain; sequence TSRFGHQFLEKFGWKPGMGLGLSPMNSNTSHIKVSIKDDNVGLGAKLK. The tract at residues 147 to 239 is disordered; the sequence is SNAKKRKREG…SASNIPDAVN (93 aa). Residues 157 to 168 are compositionally biased toward acidic residues; it reads DDSEDEDDDDKE. The span at 175 to 203 shows a compositional bias: basic residues; that stretch reads KKHKKHKKHKKDKKKDKKDKKEHKKHKKE. Positions 204–221 are enriched in basic and acidic residues; the sequence is EKRLKKEKRAEKTKETKK. A Phosphoserine modification is found at serine 230.

This sequence belongs to the PINX1 family. As to quaternary structure, interacts with EST2.

It localises to the nucleus. The protein localises to the nucleolus. Its function is as follows. Involved in rRNA-processing at A0, A1 and A2 sites through its action in U18 and U24 snoRNA 3'-end final trimming. Negative regulator of telomerase through competition for binding to EST2 with TLC1. In Saccharomyces cerevisiae (strain ATCC 204508 / S288c) (Baker's yeast), this protein is Protein PXR1 (PXR1).